The primary structure comprises 371 residues: MDLSNSSPVITDPVAISQQLLGGLPSNLMQFSVMPGGYSSSGMNVGVSRLKIEEVLVNGLLDAMKSSSPRRRLNVAFGEDNSSEEEDPAYSAWMAKCPSALASFKQIVASAQGKKIAVFLDYDGTLSPIVDDPDKAVMSPVMRAAVRNVAKYFPTAIVSGRSRNKVFEFVKLKELYYAGSHGMDIMAPSANHEHSAEKSKQANLFQPAHDFLPMIDEVTKSLLQVVSGIEGATVENNKFCVSVHYRNVAEKDWKLVARLVNEVLEAFPRLKVTNGRMVLEVRPVIDWDKGKAVEFLLQSLGLNDSENVIPIYIGDDRTDEDAFKVLRQRNCGYGILVSQVPKETEAFYSLRDPSEVMEFLNFLVRWKKHSV.

Belongs to the trehalose phosphatase family. Requires a divalent metal cation as cofactor. As to expression, expressed in roots and shoots.

The enzyme catalyses alpha,alpha-trehalose 6-phosphate + H2O = alpha,alpha-trehalose + phosphate. The protein operates within glycan biosynthesis; trehalose biosynthesis. Removes the phosphate from trehalose 6-phosphate to produce free trehalose. Trehalose accumulation in plant improves abiotic stress tolerance. In Oryza sativa subsp. japonica (Rice), this protein is Probable trehalose-phosphate phosphatase 1 (TPP1).